Here is a 333-residue protein sequence, read N- to C-terminus: Galactinol synthase 5 (333 aa).

Residue K103 is part of the active site. Mn(2+) contacts are provided by D119, D121, and H257.

Belongs to the glycosyltransferase 8 family. Galactosyltransferase subfamily. Requires a divalent metal cation as cofactor.

Its subcellular location is the cytoplasm. It carries out the reaction myo-inositol + UDP-alpha-D-galactose = alpha-D-galactosyl-(1-&gt;3)-1D-myo-inositol + UDP + H(+). In terms of biological role, galactinol synthase involved in the biosynthesis of raffinose family oligosaccharides (RFOs) that function as osmoprotectants. May promote plant stress tolerance. In Arabidopsis thaliana (Mouse-ear cress), this protein is Galactinol synthase 5 (GOLS5).